Reading from the N-terminus, the 329-residue chain is Methionyl-tRNA formyltransferase (329 aa).

112–115 (SILP) is a binding site for (6S)-5,6,7,8-tetrahydrofolate.

Belongs to the Fmt family.

The catalysed reaction is L-methionyl-tRNA(fMet) + (6R)-10-formyltetrahydrofolate = N-formyl-L-methionyl-tRNA(fMet) + (6S)-5,6,7,8-tetrahydrofolate + H(+). Its function is as follows. Attaches a formyl group to the free amino group of methionyl-tRNA(fMet). The formyl group appears to play a dual role in the initiator identity of N-formylmethionyl-tRNA by promoting its recognition by IF2 and preventing the misappropriation of this tRNA by the elongation apparatus. This Shewanella sediminis (strain HAW-EB3) protein is Methionyl-tRNA formyltransferase.